The chain runs to 197 residues: Imidazoleglycerol-phosphate dehydratase (197 aa).

Belongs to the imidazoleglycerol-phosphate dehydratase family.

It localises to the cytoplasm. It carries out the reaction D-erythro-1-(imidazol-4-yl)glycerol 3-phosphate = 3-(imidazol-4-yl)-2-oxopropyl phosphate + H2O. It functions in the pathway amino-acid biosynthesis; L-histidine biosynthesis; L-histidine from 5-phospho-alpha-D-ribose 1-diphosphate: step 6/9. This chain is Imidazoleglycerol-phosphate dehydratase, found in Methylocella silvestris (strain DSM 15510 / CIP 108128 / LMG 27833 / NCIMB 13906 / BL2).